The sequence spans 362 residues: Transcription factor bHLH133 (362 aa).

Residues 209–258 (LQVPSSQSTLKVRKEKLGGRIASLHQLVSPFGKTDTASVLSEAIGYIRFL) enclose the bHLH domain.

Belongs to the bHLH protein family. In terms of assembly, homodimer.

The protein localises to the nucleus. This is Transcription factor bHLH133 (BHLH133) from Arabidopsis thaliana (Mouse-ear cress).